The primary structure comprises 356 residues: Protein pelota homolog (356 aa).

Belongs to the eukaryotic release factor 1 family. Pelota subfamily. Monomer. The cofactor is a divalent metal cation.

It localises to the cytoplasm. May function in recognizing stalled ribosomes, interact with stem-loop structures in stalled mRNA molecules, and effect endonucleolytic cleavage of the mRNA. May play a role in the release non-functional ribosomes and degradation of damaged mRNAs. Has endoribonuclease activity. The sequence is that of Protein pelota homolog from Pyrococcus furiosus (strain ATCC 43587 / DSM 3638 / JCM 8422 / Vc1).